Here is a 337-residue protein sequence, read N- to C-terminus: tRNA N6-adenosine threonylcarbamoyltransferase (337 aa).

His-111 and His-115 together coordinate Fe cation. Residues 134–138 (LVSGG), Asp-167, Gly-180, and Asn-272 each bind substrate. Position 300 (Asp-300) interacts with Fe cation.

This sequence belongs to the KAE1 / TsaD family. Fe(2+) is required as a cofactor.

It is found in the cytoplasm. The catalysed reaction is L-threonylcarbamoyladenylate + adenosine(37) in tRNA = N(6)-L-threonylcarbamoyladenosine(37) in tRNA + AMP + H(+). Its function is as follows. Required for the formation of a threonylcarbamoyl group on adenosine at position 37 (t(6)A37) in tRNAs that read codons beginning with adenine. Is involved in the transfer of the threonylcarbamoyl moiety of threonylcarbamoyl-AMP (TC-AMP) to the N6 group of A37, together with TsaE and TsaB. TsaD likely plays a direct catalytic role in this reaction. This is tRNA N6-adenosine threonylcarbamoyltransferase from Cronobacter sakazakii (strain ATCC BAA-894) (Enterobacter sakazakii).